Consider the following 859-residue polypeptide: Homeobox-leucine zipper protein HOX32 (859 aa).

Residues A7–G31 form a disordered region. The segment at residues D29–K92 is a DNA-binding region (homeobox). Positions V100–N129 form a coiled coil. Over residues T146–A164 the composition is skewed to polar residues. Residues T146–A172 form a disordered region. The START domain occupies D171–E393.

This sequence belongs to the HD-ZIP homeobox family. Class III subfamily. As to expression, expressed in seedlings, roots, stems, leaf sheaths and blades and panicles.

It is found in the nucleus. Probable transcription factor. This Oryza sativa subsp. japonica (Rice) protein is Homeobox-leucine zipper protein HOX32 (HOX32).